Consider the following 425-residue polypeptide: Histidine--tRNA ligase (425 aa).

Belongs to the class-II aminoacyl-tRNA synthetase family. Homodimer.

The protein localises to the cytoplasm. The catalysed reaction is tRNA(His) + L-histidine + ATP = L-histidyl-tRNA(His) + AMP + diphosphate + H(+). This Pelotomaculum thermopropionicum (strain DSM 13744 / JCM 10971 / SI) protein is Histidine--tRNA ligase.